Consider the following 108-residue polypeptide: Small ribosomal subunit protein uS17 (108 aa).

It belongs to the universal ribosomal protein uS17 family. As to quaternary structure, part of the 30S ribosomal subunit.

One of the primary rRNA binding proteins, it binds specifically to the 5'-end of 16S ribosomal RNA. The chain is Small ribosomal subunit protein uS17 from Methanoculleus marisnigri (strain ATCC 35101 / DSM 1498 / JR1).